Reading from the N-terminus, the 338-residue chain is Ferrochelatase (338 aa).

H189 and E293 together coordinate Fe cation.

This sequence belongs to the ferrochelatase family.

Its subcellular location is the cytoplasm. The enzyme catalyses heme b + 2 H(+) = protoporphyrin IX + Fe(2+). The protein operates within porphyrin-containing compound metabolism; protoheme biosynthesis; protoheme from protoporphyrin-IX: step 1/1. Its function is as follows. Catalyzes the ferrous insertion into protoporphyrin IX. This Azotobacter vinelandii (strain DJ / ATCC BAA-1303) protein is Ferrochelatase.